The sequence spans 70 residues: MSNKMTGLVKWFNPEKGFGFITPKDGSKDVFVHFSAIQSNDFKTLTENQEVEFGIENGPKGPAAVHVVAL.

A CSD domain is found at 7 to 67; it reads GLVKWFNPEK…GPKGPAAVHV (61 aa).

The protein resides in the cytoplasm. In Escherichia coli O6:H1 (strain CFT073 / ATCC 700928 / UPEC), this protein is Cold shock-like protein CspI (cspI).